The sequence spans 397 residues: Thioredoxin-interacting protein (397 aa).

A Glycyl lysine isopeptide (Lys-Gly) (interchain with G-Cter in ubiquitin) cross-link involves residue Lys213. Ser362 carries the phosphoserine modification.

It belongs to the arrestin family. As to quaternary structure, homodimer; disulfide-linked. Interacts with TXN/thioredoxin through its redox-active site. Interacts with transcriptional repressors ZBTB16, ZBTB32 and HDAC1. Interacts with DDIT4. Post-translationally, ubiquitinated; undergoes heterotypic 'Lys-48'-/'Lys-63'-branched polyubiquitination catalyzed by ITCH and UBR5 resulting in proteasomal degradation. Deubiquitinated by USP5, leading to TXNIP stabilization. Ubiquitously expressed.

It is found in the cytoplasm. Functionally, may act as an oxidative stress mediator by inhibiting thioredoxin activity or by limiting its bioavailability. Interacts with COPS5 and restores COPS5-induced suppression of CDKN1B stability, blocking the COPS5-mediated translocation of CDKN1B from the nucleus to the cytoplasm. Functions as a transcriptional repressor, possibly by acting as a bridge molecule between transcription factors and corepressor complexes, and over-expression will induce G0/G1 cell cycle arrest. Required for the maturation of natural killer cells. Acts as a suppressor of tumor cell growth. Inhibits the proteasomal degradation of DDIT4, and thereby contributes to the inhibition of the mammalian target of rapamycin complex 1 (mTORC1). This chain is Thioredoxin-interacting protein (Txnip), found in Mus musculus (Mouse).